We begin with the raw amino-acid sequence, 364 residues long: Fructose-bisphosphate aldolase C (364 aa).

At tyrosine 5 the chain carries Phosphotyrosine. A phosphoserine mark is found at serine 36, serine 39, and serine 45. Arginine 56 contacts substrate. Lysine 111 is subject to N6-acetyllysine. Serine 132 carries the phosphoserine modification. Lysine 147 serves as a coordination point for substrate. Residue glutamate 188 is the Proton acceptor of the active site. Residue lysine 230 is the Schiff-base intermediate with dihydroxyacetone-P of the active site.

The protein belongs to the class I fructose-bisphosphate aldolase family. As to quaternary structure, homotetramer. Interacts with ATP6V1E1.

It carries out the reaction beta-D-fructose 1,6-bisphosphate = D-glyceraldehyde 3-phosphate + dihydroxyacetone phosphate. The protein operates within carbohydrate degradation; glycolysis; D-glyceraldehyde 3-phosphate and glycerone phosphate from D-glucose: step 4/4. The chain is Fructose-bisphosphate aldolase C (ALDOC) from Macaca fascicularis (Crab-eating macaque).